An 80-amino-acid chain; its full sequence is Antitoxin VapB15 (80 aa).

Residues 60 to 80 form a disordered region; the sequence is DFSNDEIESFSDTDRKLADES. E67 contributes to the Mg(2+) binding site. E67 is a Mn(2+) binding site. Residues 71–80 show a composition bias toward basic and acidic residues; sequence DTDRKLADES.

In terms of assembly, forms a VapB15-VapC15(2) heterotrimer and a VapB15(2)-VapC15(2) heterotetramer; each toxin pair forms a homodimer which creates a channel in which the antitoxin binds. Requires Mg(2+) as cofactor. The cofactor is Mn(2+).

In terms of biological role, antitoxin component of a type II toxin-antitoxin (TA) system. Neutralizes the toxic effect of cognate toxin VapC15. This chain is Antitoxin VapB15 (vapB15), found in Mycobacterium tuberculosis (strain CDC 1551 / Oshkosh).